The primary structure comprises 865 residues: V-type proton ATPase 116 kDa subunit a 3 (865 aa).

Residues 1–409 (MGSIYRSEHM…VNPAPWTIIS (409 aa)) are Cytoplasmic-facing. The stretch at 51-121 (FVNEVRRCDE…NKNCKVLKNN (71 aa)) forms a coiled coil. Residues 410–430 (FPFLFAVMFGDAGHGIIMLIA) form a helical membrane-spanning segment. Residues 431–453 (ASAFVIFEKKLISMKIKDEIFNT) lie on the Extracellular side of the membrane. A helical membrane pass occupies residues 454–474 (FFGGRYVVLLMGMFAIYTGFI). Residues 475 to 556 (YNDFYSKSVN…FLNPMKMKTS (82 aa)) are Cytoplasmic-facing. The helical transmembrane segment at 557–577 (ILLGISQMAFGIMLSLMNHIG) threads the bilayer. N578 is a glycosylation site (N-linked (GlcNAc...) asparagine). At 578-583 (NRSVVD) the chain is on the extracellular side. Residues 584–604 (IVFVFIPQCLFLGCIFVYLCL) traverse the membrane as a helical segment. Residues 605-623 (QVLMKWIFFYVKPAYIFGR) are Cytoplasmic-facing. The helical transmembrane segment at 624 to 644 (LYPGSNCAPSLLIGLINMFMV) threads the bilayer. Topologically, residues 645–688 (KSRDASFAHDVGTAAGKEWVIVNGQNVTYTINDQCYLQQWYPNQ) are extracellular. N670 and N687 each carry an N-linked (GlcNAc...) asparagine glycan. The chain crosses the membrane as a helical span at residues 689 to 709 (SLVELILLLIAVVSVPVMLLV). The Cytoplasmic portion of the chain corresponds to 710 to 798 (KPFYIRWRHS…LTMGGWGGSA (89 aa)). A helical membrane pass occupies residues 799-819 (AITILFYFIFSILSVCILILM). Topologically, residues 820–865 (EGLSAFLHAIRLHWVEFQSKFYGGTGIQFEPFCFTKIIRVYEGLDQ) are extracellular.

This sequence belongs to the V-ATPase 116 kDa subunit family. V-ATPase is a heteromultimeric enzyme made up of two complexes: the ATP-hydrolytic V1 complex and the proton translocation V0 complex. The V1 complex consists of three catalytic AB heterodimers that form a heterohexamer, three peripheral stalks each consisting of EG heterodimers, one central rotor including subunits D and F, and the regulatory subunits C and H. The proton translocation complex V0 consists of the proton transport subunit a, a ring of proteolipid subunits c9c'', rotary subunit d, subunits e and f, and the accessory subunits vah-19/Ac45 and vah-20/PRR. Interacts with V-type proton ATPase subunit C vha-11.

It is found in the apical cell membrane. In terms of biological role, subunit of the V0 complex of vacuolar(H+)-ATPase (V-ATPase), a multisubunit enzyme composed of a peripheral complex (V1) that hydrolyzes ATP and a membrane integral complex (V0) that translocates protons. V-ATPase is responsible for acidifying and maintaining the pH of intracellular compartments and in some cell types, is targeted to the plasma membrane, where it is responsible for acidifying the extracellular environment. In the intestine, required for the rhythmic defecation behavior by promoting acidification in the gut lumen following defecation. Also, luminal acidification is required for nutrient uptake. This Caenorhabditis elegans protein is V-type proton ATPase 116 kDa subunit a 3.